The chain runs to 701 residues: Peptide transporter CstA (701 aa).

Over 1 to 6 (MNKSGK) the chain is Cytoplasmic. Residues 7 to 27 (YLVWTVLSVMGAFALGYIALN) traverse the membrane as a helical segment. The Periplasmic segment spans residues 28–33 (RGEQIN). A helical transmembrane segment spans residues 34–54 (ALWIVVASVCIYLIAYRFYGL). Over 55–86 (YIAKNVLAVDPTRMTPAVRHNDGLDYVPTDKK) the chain is Cytoplasmic. A helical membrane pass occupies residues 87-107 (VLFGHHFAAIAGAGPLVGPVL). At 108–117 (AAQMGYLPGM) the chain is on the periplasmic side. Residues 118–138 (IWLLAGVVLAGAVQDFMVLFV) form a helical membrane-spanning segment. The Cytoplasmic segment spans residues 139–160 (STRRDGRSLGELVKEEMGPTAG). A helical transmembrane segment spans residues 161–181 (VIALVACFMIMVIILAVLAMI). Over 182 to 189 (VVKALTHS) the chain is Periplasmic. Residues 190-210 (PWGTYTVAFTIPLALFMGIYL) traverse the membrane as a helical segment. The Cytoplasmic segment spans residues 211–217 (RYLRPGR). A helical transmembrane segment spans residues 218–238 (IGEVSVIGLVFLIFAIISGGW). Residues 239-255 (VAESPTWAPYFDFTGVQ) lie on the Periplasmic side of the membrane. A helical transmembrane segment spans residues 256–276 (LTWMLVGYGFVAAVLPVWLLL). The Cytoplasmic segment spans residues 277–280 (APRD). The helical transmembrane segment at 281–301 (YLSTFLKIGTIVGLAVGILIM) threads the bilayer. The Periplasmic portion of the chain corresponds to 302–324 (RPTLTMPALTKFVDGTGPVWTGN). Residues 325 to 345 (LFPFLFITIACGAVSGFHALI) form a helical membrane-spanning segment. The Cytoplasmic portion of the chain corresponds to 346–372 (SSGTTPKMLANEGQACFIGYGGMLMES). Residues 373–393 (FVAIMALVSACIIDPGVYFAM) traverse the membrane as a helical segment. The Periplasmic segment spans residues 394–395 (NS). Residues 396–416 (PMAVLAPAGTADVVASAAQVV) traverse the membrane as a helical segment. Residues 417 to 439 (SSWGFSITPDTLNQIASEVGEQS) are Cytoplasmic-facing. A helical transmembrane segment spans residues 440 to 460 (IISRAGGAPTLAVGMAYILHG). Residues 461–463 (ALG) are Periplasmic-facing. A helical membrane pass occupies residues 464–484 (GMMDVAFWYHFAILFEALFIL). Residues 485–523 (TAVDAGTRAARFMLQDLLGVVSPGLKRTDSLPANLLATA) lie on the Cytoplasmic side of the membrane. Residues 524 to 544 (LCVLAWGYFLHQGVVDPLGGI) form a helical membrane-spanning segment. The Periplasmic segment spans residues 545–550 (NTLWPL). The chain crosses the membrane as a helical span at residues 551–571 (FGIANQMLAGMALMLCAVVLF). Residues 572–577 (KMKRQR) are Cytoplasmic-facing. The chain crosses the membrane as a helical span at residues 578 to 598 (YAWVALVPTAWLLICTLTAGW). Over 599–643 (QKAFSPDAKVGFLAIANKFQAMIDSGNIPSQYTESQLAQLVFNNR) the chain is Periplasmic. The helical transmembrane segment at 644-664 (LDAGLTIFFMVVVVVLALFSI) threads the bilayer. Residues 665–701 (KTALAALKDPKPTAKETPYEPMPENVEEIVAQAKGAH) are Cytoplasmic-facing.

The protein belongs to the peptide transporter carbon starvation (CstA) (TC 2.A.114) family.

Its subcellular location is the cell inner membrane. In terms of biological role, involved in peptide utilization during carbon starvation. The protein is Peptide transporter CstA of Escherichia coli (strain K12).